Reading from the N-terminus, the 1095-residue chain is Formin-like protein 2 (1095 aa).

The GBD/FH3 domain occupies 23–469 (LPMPEPGELE…EAIQRQSTLE (447 aa)). The stretch at 381 to 478 (LLEDAETKNA…EKKIHELEKQ (98 aa)) forms a coiled coil. The interval 521-602 (PSSGPLPPPP…PSAPPLPGTS (82 aa)) is disordered. Pro residues-rich tracts occupy residues 524–534 (GPLPPPPPPLP), 548–576 (ATPPVPPPPPPPPPPPPPPPPPPPPPLPG), and 583–599 (PAPPLPPPPPPSAPPLP). The FH2 domain maps to 617–1008 (IKKPIKTKFR…LMEKLLEQEA (392 aa)).

The protein belongs to the formin homology family. Interacts with TCP11L2; this interaction promotes muscle-derived satellite cell (MDSC) migration and differentiation.

The protein resides in the cytoplasm. Functionally, plays a role in the regulation of cell morphology and cytoskeletal organization. Required in the cortical actin filament dynamics. The sequence is that of Formin-like protein 2 from Bos taurus (Bovine).